A 357-amino-acid polypeptide reads, in one-letter code: Protein RecA (357 aa).

74 to 81 contributes to the ATP binding site; sequence GPESSGKT.

The protein belongs to the RecA family.

Its subcellular location is the cytoplasm. Can catalyze the hydrolysis of ATP in the presence of single-stranded DNA, the ATP-dependent uptake of single-stranded DNA by duplex DNA, and the ATP-dependent hybridization of homologous single-stranded DNAs. It interacts with LexA causing its activation and leading to its autocatalytic cleavage. The polypeptide is Protein RecA (Bordetella petrii (strain ATCC BAA-461 / DSM 12804 / CCUG 43448)).